A 450-amino-acid chain; its full sequence is UPF0210 protein MK1214 (450 aa).

Belongs to the UPF0210 family.

The polypeptide is UPF0210 protein MK1214 (Methanopyrus kandleri (strain AV19 / DSM 6324 / JCM 9639 / NBRC 100938)).